We begin with the raw amino-acid sequence, 616 residues long: Chaperone protein DnaK (616 aa).

Residue threonine 174 is modified to Phosphothreonine; by autocatalysis. Residues 576-616 are disordered; the sequence is QASAPGAGPEGASGGFGGENKKDDNVVDADYTVIDDDKKKT. The span at 583–593 shows a compositional bias: gly residues; it reads GPEGASGGFGG.

The protein belongs to the heat shock protein 70 family.

In terms of biological role, acts as a chaperone. The protein is Chaperone protein DnaK of Heliobacterium modesticaldum (strain ATCC 51547 / Ice1).